Here is an 867-residue protein sequence, read N- to C-terminus: MVDISLKILSNEMKISIKELIKTLSEISISKTENDCISITEKKNLLKYLESKKKPFLNTFILQRKTRSTLNVFTPGGKNKSVQIEIRKKRMYLKNNKSELEPLLKNKNLLQNKEKNNLKSLKNTISKAKESQKNIDILEESKANINFKNLNKLTKSNVFNKNEKNKSLKKNINFNNHSFYSKKTIKNNTENQKLYKEEKKDYHLTTFIHNRNTEDNRDREIEKNKRNFHRNIKNYRQKKNNKQNNQIKSKKDEVRISKNRKNVKQKNKSILLQQVFKKPESVINRDVVINGAITVCDLANKMAIKSSEVIKNMMNMGIIGTINHVLDQDTAQLIAEEMGHKVILRRENELEELIMKDRDTGNNISLTRAPVVTIMGHVDHGKTSLLDYIRSTKVASSEAGGITQNIGAYHVTTDFGSVTFLDTPGHSAFTGMRSRGVKITDIVVLVVAADDGVKPQTIEAIQHAKEANVPIIVAINKIDKVDSNIDQIKNDLTKYNILSEEWGGENIFVLISAKTGKGIDNLLNAILLQSEILELKAISTGMAEGVVIESFLDKGRGPIATVLVQKGNLKKGDIILCGFEYGRIKVLRNENGKTLKHAGPSMPVEVLGLSKVPFSGEKVTVVRDEKKAKEVASYRKNKSREIKLANQNRSSLENMFKNIKKNDFSELKIIIKSDVQGSLEAISSALFKLSTNEVKVNIIGSGIGGITETDASLALASNAIILGFNVRADASAKKIIDLENLDLRYYSVIYDLLNEVKAAMTGLLSPQYKQNIIGLAEVRNIFKSPKFGLIAGCMVTEGIIKRNNPIRILRNNVVVYEGELESLRRFKEDINEIRNGMECGIGIKNYHDLNIGDVIEVFEVKEIKRIL.

The region spanning 367–534 (TRAPVVTIMG…AILLQSEILE (168 aa)) is the tr-type G domain. Residues 376–383 (GHVDHGKT) are G1. A GTP-binding site is contributed by 376 to 383 (GHVDHGKT). The tract at residues 401–405 (GITQN) is G2. The tract at residues 422-425 (DTPG) is G3. GTP is bound by residues 422–426 (DTPGH) and 476–479 (NKID). Residues 476–479 (NKID) are G4. A G5 region spans residues 512–514 (SAK).

It belongs to the TRAFAC class translation factor GTPase superfamily. Classic translation factor GTPase family. IF-2 subfamily.

It is found in the cytoplasm. Functionally, one of the essential components for the initiation of protein synthesis. Protects formylmethionyl-tRNA from spontaneous hydrolysis and promotes its binding to the 30S ribosomal subunits. Also involved in the hydrolysis of GTP during the formation of the 70S ribosomal complex. This Buchnera aphidicola subsp. Schizaphis graminum (strain Sg) protein is Translation initiation factor IF-2.